Reading from the N-terminus, the 523-residue chain is Ubiquitin carboxyl-terminal hydrolase 22-B (523 aa).

Residues 4 to 121 (AGCSHVNSFK…KEEQRKAWKL (118 aa)) form a UBP-type zinc finger. The Zn(2+) site is built by cysteine 6, histidine 8, cysteine 46, cysteine 49, cysteine 59, cysteine 62, cysteine 67, histidine 72, histidine 76, histidine 82, cysteine 95, and cysteine 98. A USP domain is found at 174-518 (RGLINLGNTC…EGYLLFYHKQ (345 aa)). Cysteine 183 acts as the Nucleophile in catalysis. Histidine 477 (proton acceptor) is an active-site residue.

Belongs to the peptidase C19 family. UBP8 subfamily. As to quaternary structure, component of some SAGA transcription coactivator-HAT complexes.

The protein resides in the nucleus. The catalysed reaction is Thiol-dependent hydrolysis of ester, thioester, amide, peptide and isopeptide bonds formed by the C-terminal Gly of ubiquitin (a 76-residue protein attached to proteins as an intracellular targeting signal).. Functionally, histone deubiquitinating component of the transcription regulatory histone acetylation (HAT) complex SAGA. Catalyzes the deubiquitination of both histones H2A and H2B, thereby acting as a coactivator. Recruited to specific gene promoters by activators, where it is required for transcription. The sequence is that of Ubiquitin carboxyl-terminal hydrolase 22-B (usp22-b) from Xenopus laevis (African clawed frog).